We begin with the raw amino-acid sequence, 400 residues long: tRNA-specific adenosine deaminase 1 (400 aa).

The A to I editase domain maps to 76-400 (SIATGVKALP…WIPTRTDDVK (325 aa)). Zn(2+) is bound at residue histidine 101. Glutamate 103 serves as the catalytic Proton donor. Arginine 108 is a 1D-myo-inositol hexakisphosphate binding site. Cysteine 157 and cysteine 223 together coordinate Zn(2+). Positions 226, 232, 369, and 375 each coordinate 1D-myo-inositol hexakisphosphate.

It belongs to the ADAT1 family. The cofactor is 1D-myo-inositol hexakisphosphate. It depends on Zn(2+) as a cofactor.

The catalysed reaction is adenosine(37) in tRNA(Ala) + H2O + H(+) = inosine(37) in tRNA(Ala) + NH4(+). Deaminates adenosine-37 to inosine in tRNA-Ala. The polypeptide is tRNA-specific adenosine deaminase 1 (TAD1) (Saccharomyces cerevisiae (strain ATCC 204508 / S288c) (Baker's yeast)).